The following is a 637-amino-acid chain: Interleukin-17 receptor E (637 aa).

The signal sequence occupies residues 1-24 (MGSPRLAALLLSQPLLFICLAVSA). Residues 25-415 (QVACPCLPRW…LCPDVSHRHL (391 aa)) lie on the Extracellular side of the membrane. N-linked (GlcNAc...) asparagine glycosylation is found at asparagine 278 and asparagine 307. A helical membrane pass occupies residues 416 to 436 (GLLILALLGLTTLLGVVLVLF). Residues 437-637 (CRRLLPGPGR…TNSPCGFSCL (201 aa)) are Cytoplasmic-facing. The SEFIR domain maps to 447 to 583 (TRPVLLLHAA…LLRDLPRLLR (137 aa)).

In terms of assembly, forms heterodimers with IL17RE; the heterodimer binds IL17C.

Its subcellular location is the cell membrane. Its function is as follows. Specific functional receptor for IL17C, signaling through the NF-kappa-B and MAPK pathways. Requires TRAF3IP2 /ACT1 for signaling. Crucial regulator in innate immunity to bacterial pathogens. The protein is Interleukin-17 receptor E (Il17re) of Rattus norvegicus (Rat).